We begin with the raw amino-acid sequence, 317 residues long: Putative 2-hydroxyacid dehydrogenase SAR2389 (317 aa).

Residues 155-156 (EI), 234-236 (ASR), and aspartate 260 each bind NAD(+). Arginine 236 is an active-site residue. Glutamate 265 is a catalytic residue. Histidine 283 (proton donor) is an active-site residue. Position 283–286 (283–286 (HIGN)) interacts with NAD(+).

Belongs to the D-isomer specific 2-hydroxyacid dehydrogenase family.

This is Putative 2-hydroxyacid dehydrogenase SAR2389 from Staphylococcus aureus (strain MRSA252).